Here is a 245-residue protein sequence, read N- to C-terminus: tRNA1(Val) (adenine(37)-N6)-methyltransferase (245 aa).

This sequence belongs to the methyltransferase superfamily. tRNA (adenine-N(6)-)-methyltransferase family.

The protein resides in the cytoplasm. The catalysed reaction is adenosine(37) in tRNA1(Val) + S-adenosyl-L-methionine = N(6)-methyladenosine(37) in tRNA1(Val) + S-adenosyl-L-homocysteine + H(+). Its function is as follows. Specifically methylates the adenine in position 37 of tRNA(1)(Val) (anticodon cmo5UAC). The sequence is that of tRNA1(Val) (adenine(37)-N6)-methyltransferase from Escherichia coli O157:H7.